Here is a 337-residue protein sequence, read N- to C-terminus: Holliday junction branch migration complex subunit RuvB (337 aa).

Residues 1-22 (MEDERITSAEVQSPDEENEELS) form a disordered region. Residues 1-184 (MEDERITSAE…FGIVEHMNYY (184 aa)) are large ATPase domain (RuvB-L). Residues Leu-23, Arg-24, Gly-65, Lys-68, Thr-69, Thr-70, 131-133 (EDF), Arg-174, Tyr-184, and Arg-221 contribute to the ATP site. Thr-69 lines the Mg(2+) pocket. Residues 185 to 255 (NEADLANIVR…LVSQSLKLLQ (71 aa)) form a small ATPAse domain (RuvB-S) region. The head domain (RuvB-H) stretch occupies residues 258–337 (NRGLDRTDKK…LGLIDQYMNK (80 aa)). Residues Arg-313 and Arg-318 each coordinate DNA.

Belongs to the RuvB family. In terms of assembly, homohexamer. Forms an RuvA(8)-RuvB(12)-Holliday junction (HJ) complex. HJ DNA is sandwiched between 2 RuvA tetramers; dsDNA enters through RuvA and exits via RuvB. An RuvB hexamer assembles on each DNA strand where it exits the tetramer. Each RuvB hexamer is contacted by two RuvA subunits (via domain III) on 2 adjacent RuvB subunits; this complex drives branch migration. In the full resolvosome a probable DNA-RuvA(4)-RuvB(12)-RuvC(2) complex forms which resolves the HJ.

Its subcellular location is the cytoplasm. It catalyses the reaction ATP + H2O = ADP + phosphate + H(+). Functionally, the RuvA-RuvB-RuvC complex processes Holliday junction (HJ) DNA during genetic recombination and DNA repair, while the RuvA-RuvB complex plays an important role in the rescue of blocked DNA replication forks via replication fork reversal (RFR). RuvA specifically binds to HJ cruciform DNA, conferring on it an open structure. The RuvB hexamer acts as an ATP-dependent pump, pulling dsDNA into and through the RuvAB complex. RuvB forms 2 homohexamers on either side of HJ DNA bound by 1 or 2 RuvA tetramers; 4 subunits per hexamer contact DNA at a time. Coordinated motions by a converter formed by DNA-disengaged RuvB subunits stimulates ATP hydrolysis and nucleotide exchange. Immobilization of the converter enables RuvB to convert the ATP-contained energy into a lever motion, pulling 2 nucleotides of DNA out of the RuvA tetramer per ATP hydrolyzed, thus driving DNA branch migration. The RuvB motors rotate together with the DNA substrate, which together with the progressing nucleotide cycle form the mechanistic basis for DNA recombination by continuous HJ branch migration. Branch migration allows RuvC to scan DNA until it finds its consensus sequence, where it cleaves and resolves cruciform DNA. The polypeptide is Holliday junction branch migration complex subunit RuvB (Pediococcus pentosaceus (strain ATCC 25745 / CCUG 21536 / LMG 10740 / 183-1w)).